The sequence spans 344 residues: tRNA N6-adenosine threonylcarbamoyltransferase (344 aa).

Residues H111 and H115 each contribute to the Fe cation site. Substrate-binding positions include 134–138 (LVSGG), D167, G180, and N273. D301 lines the Fe cation pocket.

The protein belongs to the KAE1 / TsaD family. Fe(2+) serves as cofactor.

The protein resides in the cytoplasm. It carries out the reaction L-threonylcarbamoyladenylate + adenosine(37) in tRNA = N(6)-L-threonylcarbamoyladenosine(37) in tRNA + AMP + H(+). Functionally, required for the formation of a threonylcarbamoyl group on adenosine at position 37 (t(6)A37) in tRNAs that read codons beginning with adenine. Is involved in the transfer of the threonylcarbamoyl moiety of threonylcarbamoyl-AMP (TC-AMP) to the N6 group of A37, together with TsaE and TsaB. TsaD likely plays a direct catalytic role in this reaction. The polypeptide is tRNA N6-adenosine threonylcarbamoyltransferase (Cupriavidus necator (strain ATCC 17699 / DSM 428 / KCTC 22496 / NCIMB 10442 / H16 / Stanier 337) (Ralstonia eutropha)).